The primary structure comprises 66 residues: U1-theraphotoxin-Cg1a 1 (66 aa).

The first 21 residues, 1–21, serve as a signal peptide directing secretion; it reads MKTSALFVIFGLVLLFCNSFA. A propeptide spanning residues 22–29 is cleaved from the precursor; the sequence is AELKTTGR. Disulfide bonds link C31/C46, C38/C51, and C45/C58. P63 is subject to Proline amide.

Belongs to the neurotoxin 10 (Hwtx-1) family. 46 (Jztx-7/10/12) subfamily. As to expression, expressed by the venom gland.

The protein resides in the secreted. In terms of biological role, probable ion channel inhibitor. This is U1-theraphotoxin-Cg1a 1 from Chilobrachys guangxiensis (Chinese earth tiger tarantula).